A 1202-amino-acid polypeptide reads, in one-letter code: Caskin-2 (1202 aa).

ANK repeat units follow at residues 48–77, 81–110, 114–143, 147–176, 188–217, and 220–249; these read DGFS…TVDI, NGMR…AVNA, DGQI…NPCL, AKKT…CVAL, NYTT…EINR, and KTGT…DVNI. Tyrosine 253 is modified (phosphotyrosine). The region spanning 281–347 is the SH3 domain; sequence SGILKVRALK…PPGIVEVVSK (67 aa). The segment at 355 to 460 is disordered; the sequence is RLPSAPTPLR…GLHPPSLADN (106 aa). Residues serine 358, serine 393, serine 396, serine 403, serine 406, and serine 409 each carry the phosphoserine modification. Polar residues predominate over residues 415-425; that stretch reads SAGSGQSSEGT. Residue serine 471 is modified to Phosphoserine. SAM domains lie at 489-552 and 558-622; these read KDAQ…LSIA and YIPT…LAEL. Disordered stretches follow at residues 676–1104 and 1116–1181; these read LQAA…APKP and GPKL…STKH. The residue at position 725 (serine 725) is a Phosphoserine. Positions 731 to 740 are enriched in basic and acidic residues; the sequence is NLPEGTERPP. A compositionally biased stretch (pro residues) spans 765-774; sequence SPAPGPPPGA. Serine 858, serine 877, serine 878, and serine 892 each carry phosphoserine. Over residues 913 to 923 the composition is skewed to pro residues; that stretch reads PSEPPGPPAPA. The segment covering 940 to 949 has biased composition (low complexity); sequence PPSRGSSGEG. Composition is skewed to pro residues over residues 966 to 978 and 1018 to 1030; these read PAGP…PVPP and PAAP…PGES. Residues 1031-1051 are compositionally biased toward low complexity; it reads PPASSLPQPEPSSLPAQGVPT. Pro residues-rich tracts occupy residues 1052-1068 and 1124-1133; these read PLAP…PCPG and GPRPVPPPRP. The span at 1135 to 1151 shows a compositional bias: polar residues; sequence STGTVGPGQAQQRLEQT. A compositionally biased stretch (basic and acidic residues) spans 1161–1172; it reads AAEKSIGTKEQE.

As to quaternary structure, may not bind CASK.

It localises to the cytoplasm. The protein is Caskin-2 (CASKIN2) of Homo sapiens (Human).